Consider the following 310-residue polypeptide: Glutaminase (310 aa).

Positions 66, 117, 161, 168, 192, 244, and 262 each coordinate substrate. An N6-acetyllysine modification is found at Lys294.

This sequence belongs to the glutaminase family. Homotetramer.

It carries out the reaction L-glutamine + H2O = L-glutamate + NH4(+). This chain is Glutaminase, found in Escherichia coli O81 (strain ED1a).